The chain runs to 380 residues: High affinity transport system protein p37 (380 aa).

The N-terminal stretch at 1-26 is a signal peptide; the sequence is MLKRKKLLQGFLKFLPLIIPATIFVS. Cys-27 is lipidated: N-palmitoyl cysteine. Residue Cys-27 is the site of S-diacylglycerol cysteine attachment. Positions 285–304 are disordered; it reads NHFYTPTENNGKGDSEKSNN.

It is found in the cell membrane. Its function is as follows. P37 is part of a high-affinity transport system. The polypeptide is High affinity transport system protein p37 (p37) (Mycoplasma pneumoniae (strain ATCC 29342 / M129 / Subtype 1) (Mycoplasmoides pneumoniae)).